The sequence spans 347 residues: Inosamine-phosphate amidinotransferase 1 (347 aa).

Catalysis depends on residues aspartate 179 and histidine 227. Cysteine 332 functions as the Amidino-cysteine intermediate in the catalytic mechanism.

Belongs to the amidinotransferase family. As to quaternary structure, homodimer.

The enzyme catalyses 1-amino-1-deoxy-scyllo-inositol 4-phosphate + L-arginine = 1-guanidino-1-deoxy-scyllo-inositol 4-phosphate + L-ornithine. The protein operates within antibiotic biosynthesis; streptomycin biosynthesis. Catalyzes two non-consecutive transamidination reactions. It converts scyllo-inosamine 4-phosphate into N-amidino-scyllo-inosamine 4-phosphate and N1-amidinostreptamine 6-phosphate into streptidine 6-phosphate. This Streptomyces griseus protein is Inosamine-phosphate amidinotransferase 1 (strB1).